Consider the following 252-residue polypeptide: Maintenance of carboxysome distribution protein A (252 aa).

Positions 11, 12, 14, 15, 16, 17, 41, 147, 151, 182, 183, 216, 217, and 218 each coordinate ATP. Threonine 16 contributes to the Mg(2+) binding site.

This sequence belongs to the ParA family. McdA subfamily. As to quaternary structure, self-associates (probably a homodimer), interacts with McdB probably via the C-terminus of both proteins. Shows no signs of filament formation. Homodimerizes in the presence of ATP, making extra nucleotide contacts than with ADP or AMP-PNP. Each subunit binds 1 ATP molecule; Glu-147, Lys-151 and Arg-183 cross the dimer interface to contact ATP in the other subunit, while Phe-182, Arg-183 and Phe-221 stack with the adenine base in their own subunit.

The protein resides in the cytoplasm. It localises to the nucleoid. The catalysed reaction is ATP + H2O = ADP + phosphate + H(+). McdA and McdB together mediate carboxysome (Cb) spacing, size, ultrastructure and probably inheritance in the cell. Together they prevent Cb aggregation. McdA is an ATPase that forms dynamic gradients on the nucleoid in response to adapter protein McdB, which associates with carboxysomes. The interplay between McdA gradients on the nucleoid and McdB-bound carboxysomes result in the equal spacing of Cbs along the cell length. Binds nucleoid DNA in an ATP-dependent manner; neither ADP nor ATP-gamma-S support DNA binding. Upon ATP-binding dimerizes and binds nucleoid DNA; the (McdA-ATP)2 dimer transiently binds McdB-bound Cbs. McdA's ATPase activity is stimulated 2-fold by DNA and McdB; ATP hydrolysis causes McdA release from DNA. Overexpression leads to loss of McdA oscillation, diffuse nucleoid staining by McdA with formation of large carboxysome aggregates that are in regions depleted of McdA; McdA remains nucleoid-associated. Functionally, mutagenesis studies (characterized in vivo) suggest ATP binding, protein dimerization and a conformational change are necessary for nucleoid DNA-binding and binding to McdB-bound Cbs, which tethers Cbs to the nucleoid. Eventual McdB-stimulated ATP hydrolysis causes de-dimerization of McdA which no longer binds the nucleoid and releases McdB and Cbs. McdB-bound Cbs then move to a region of higher McdA concentration, distributing Cbs across the nucleoid. In terms of biological role, incorrect positioning (aggregation) of carboxysomes results in reduced CO(2) fixation by encapsulated ribulose-1,5-bisphosphate carboxylase (RuBisCO, cbbL/cbbS), which leads to slower growth, cell elongation, asymmetric cell division and an increase in RuBisCO levels. The protein is Maintenance of carboxysome distribution protein A of Synechococcus elongatus (strain ATCC 33912 / PCC 7942 / FACHB-805) (Anacystis nidulans R2).